The chain runs to 792 residues: Lon protease (792 aa).

The Lon N-terminal domain occupies 16–211 (DAVVVVPVSN…KVSAFLAQRL (196 aa)). 361-368 (GPPGVGKT) is a binding site for ATP. The 182-residue stretch at 597-778 (TSVPGVATGL…EDAIEAGLDP (182 aa)) folds into the Lon proteolytic domain. Residues serine 684 and lysine 727 contribute to the active site.

This sequence belongs to the peptidase S16 family. Homohexamer. Organized in a ring with a central cavity.

The protein resides in the cytoplasm. The enzyme catalyses Hydrolysis of proteins in presence of ATP.. Functionally, ATP-dependent serine protease that mediates the selective degradation of mutant and abnormal proteins as well as certain short-lived regulatory proteins. Required for cellular homeostasis and for survival from DNA damage and developmental changes induced by stress. Degrades polypeptides processively to yield small peptide fragments that are 5 to 10 amino acids long. Binds to DNA in a double-stranded, site-specific manner. The protein is Lon protease of Phenylobacterium zucineum (strain HLK1).